A 549-amino-acid chain; its full sequence is MESLALRSISLSASYLSLHRSSSKSFALLPPSISVHTSPTLRSLSISSPRFTLRATASSLPEEQNKPQPPPPSPPQPQGAKLIPLAISVSIGLIVRFLIPRPEQVTSQGWQLLSIFLFTISGLVLGPLPVGAWAFIGLTASIVTKTLPFSTAFAAFTNELIWLIAISFFFARGFIKTGLGDRIATYFVKWLGKSTLGLSYGLAFCETLMGLIMPSTMARAGGVFLPVIKSLAISAGSYPGDPSSRKLGSFLIQTQLQCSGASGAILLTSAAQNLLCLKLAREVGVVISNPWITWFKVASVPAFVSLLCTPLIIYKLYPPELKHTPEAPAAAAKKLERLGPITKNEWIMLGAMAFTVSLWVFGEAIGIASVVSAMIGLSTLLLLGVINWDDCLSDKSAWDSLTWFAVLIGMAGQLTNLGVVAWMSDCVAKLLQSLSLTWPASFIILQACYLLIHYLFASQTGHAGALYPPFLAMQIAAGVPGVLAALCLAFNNNLSGALAHYSGGPAALYYGAGYVDLRDMFRVGFVMALVQAIIWGGVGSFWWKFLGLY.

A chloroplast-targeting transit peptide spans 1-54; it reads MESLALRSISLSASYLSLHRSSSKSFALLPPSISVHTSPTLRSLSISSPRFTLR. Positions 57–79 are disordered; the sequence is ASSLPEEQNKPQPPPPSPPQPQG. A compositionally biased stretch (pro residues) spans 67-77; it reads PQPPPPSPPQP. 12 helical membrane-spanning segments follow: residues 79–99, 115–135, 151–171, 220–240, 247–267, 294–314, 344–364, 365–385, 403–423, 436–456, 470–490, and 523–543; these read GAKL…RFLI, IFLF…AWAF, TAFA…FFFA, AGGV…SYPG, LGSF…AILL, WFKV…LIIY, NEWI…FGEA, IGIA…LLGV, WFAV…VAWM, LTWP…HYLF, FLAM…CLAF, and VGFV…SFWW.

Belongs to the SLC13A/DASS transporter (TC 2.A.47) family. DIT1 subfamily. As to expression, expressed in roots, rosette and cauline leaves, stems, flowers and siliques.

The protein resides in the plastid. It localises to the chloroplast inner membrane. Its function is as follows. May be involved in the transport of dicarboxylate compounds. This Arabidopsis thaliana (Mouse-ear cress) protein is Dicarboxylate transporter 2.2, chloroplastic (DIT2-2).